Consider the following 217-residue polypeptide: Polyadenylate-binding protein 3 (217 aa).

A disordered region spans residues 1 to 28; it reads MEEEEHEVYGGEIPEVGDTDVPDPDIDM. Residues 15–28 are compositionally biased toward acidic residues; that stretch reads EVGDTDVPDPDIDM. A coiled-coil region spans residues 30–71; it reads AADEDAVTELAEMKRRLKEMEEEAAALREMQAKVEKEMGATQ. The necessary for homooligomerization stretch occupies residues 75–216; it reads SMAANQEGKE…FRRPMRYMPY (142 aa). Positions 89–165 constitute an RRM domain; the sequence is RSVYVGNVDY…RQLKVSPKRT (77 aa). Positions 162–169 match the Nuclear localization signal motif; sequence PKRTNVPG.

As to quaternary structure, monomer and homooligomer. Binds RNA as a monomer and oligomerizes when bound to poly(A). Forms a complex with cleavage and polyadenylation specificity factor (CPSF) subunits PAPS4, PABN1, PABN2, CSTF50 and FIPS5. Interacts with CSP3.

It localises to the nucleus speckle. Its subcellular location is the cytoplasm. In terms of biological role, involved in the 3'-end formation of mRNA precursors (pre-mRNA) by the addition of a poly(A) tail of 200-250 nt to the upstream cleavage product. Stimulates poly(A) polymerase (PAPOLA) conferring processivity on the poly(A) tail elongation reaction and also controls the poly(A) tail length. Increases the affinity of poly(A) polymerase for RNA. Binds to poly(A) and to poly(G) with high affinity. May protect the poly(A) tail from degradation. This chain is Polyadenylate-binding protein 3, found in Arabidopsis thaliana (Mouse-ear cress).